The sequence spans 733 residues: Alpha,alpha-trehalose-phosphate synthase [UDP-forming] A (733 aa).

It in the N-terminal section; belongs to the glycosyltransferase 20 family. This sequence in the C-terminal section; belongs to the trehalose phosphatase family.

It catalyses the reaction D-glucose 6-phosphate + UDP-alpha-D-glucose = alpha,alpha-trehalose 6-phosphate + UDP + H(+). Its function is as follows. Synthesizes trehalose 6-phosphate, the precursor for the production of trehalose, the main carbohydrate storage reserve of the dormant spore. Trehalose accumulates in both prestalk and prespore cells and then is rapidly metabolized during terminal differentiation of stalk cells, while being stored in spores, where it serves as the principal energy and carbon source for germination. The sequence is that of Alpha,alpha-trehalose-phosphate synthase [UDP-forming] A (tpsA) from Dictyostelium discoideum (Social amoeba).